The sequence spans 493 residues: Probable malate:quinone oxidoreductase (493 aa).

This sequence belongs to the MQO family. FAD serves as cofactor.

It catalyses the reaction (S)-malate + a quinone = a quinol + oxaloacetate. The protein operates within carbohydrate metabolism; tricarboxylic acid cycle; oxaloacetate from (S)-malate (quinone route): step 1/1. This chain is Probable malate:quinone oxidoreductase, found in Mycobacterium marinum (strain ATCC BAA-535 / M).